The chain runs to 114 residues: MAVNLYDYANQLEQALRDSDEYKAIKDAFSKVKDNEESKKLFDEFRETQLSFQQKQMQGEEIPEEDLAKAQEQAQAIEKDENISELMQAEQKMSQVFQEINQIIVKPLDEIYAD.

Belongs to the UPF0342 family.

This is UPF0342 protein SH1117 from Staphylococcus haemolyticus (strain JCSC1435).